The chain runs to 378 residues: Ribosomal RNA large subunit methyltransferase G (378 aa).

It belongs to the methyltransferase superfamily. RlmG family.

It localises to the cytoplasm. The enzyme catalyses guanosine(1835) in 23S rRNA + S-adenosyl-L-methionine = N(2)-methylguanosine(1835) in 23S rRNA + S-adenosyl-L-homocysteine + H(+). Its function is as follows. Specifically methylates the guanine in position 1835 (m2G1835) of 23S rRNA. The protein is Ribosomal RNA large subunit methyltransferase G of Escherichia coli O1:K1 / APEC.